The primary structure comprises 380 residues: Cytochrome b (380 aa).

A run of 4 helical transmembrane segments spans residues 34–54 (FGSL…LLAA), 78–99 (WLIR…YMHI), 114–134 (WNTG…GYVL), and 179–199 (FFTL…IHLT). Heme b contacts are provided by histidine 84 and histidine 98. The heme b site is built by histidine 183 and histidine 197. A ubiquinone is bound at residue histidine 202. 4 helical membrane-spanning segments follow: residues 227–247 (LKDT…ALFS), 289–309 (LGGV…PLLH), 321–341 (LSQL…WVGS), and 348–368 (FIII…ILFP).

The protein belongs to the cytochrome b family. In terms of assembly, the cytochrome bc1 complex contains 11 subunits: 3 respiratory subunits (MT-CYB, CYC1 and UQCRFS1), 2 core proteins (UQCRC1 and UQCRC2) and 6 low-molecular weight proteins (UQCRH/QCR6, UQCRB/QCR7, UQCRQ/QCR8, UQCR10/QCR9, UQCR11/QCR10 and a cleavage product of UQCRFS1). This cytochrome bc1 complex then forms a dimer. It depends on heme b as a cofactor.

It localises to the mitochondrion inner membrane. Component of the ubiquinol-cytochrome c reductase complex (complex III or cytochrome b-c1 complex) that is part of the mitochondrial respiratory chain. The b-c1 complex mediates electron transfer from ubiquinol to cytochrome c. Contributes to the generation of a proton gradient across the mitochondrial membrane that is then used for ATP synthesis. The polypeptide is Cytochrome b (MT-CYB) (Balearica regulorum (Grey crowned-crane)).